The chain runs to 446 residues: Exodeoxyribonuclease 7 large subunit (446 aa).

Belongs to the XseA family. As to quaternary structure, heterooligomer composed of large and small subunits.

It localises to the cytoplasm. The enzyme catalyses Exonucleolytic cleavage in either 5'- to 3'- or 3'- to 5'-direction to yield nucleoside 5'-phosphates.. Bidirectionally degrades single-stranded DNA into large acid-insoluble oligonucleotides, which are then degraded further into small acid-soluble oligonucleotides. This is Exodeoxyribonuclease 7 large subunit from Streptococcus gordonii (strain Challis / ATCC 35105 / BCRC 15272 / CH1 / DL1 / V288).